Consider the following 130-residue polypeptide: Small ribosomal subunit protein uS8 (130 aa).

The protein belongs to the universal ribosomal protein uS8 family. As to quaternary structure, part of the 30S ribosomal subunit. Contacts proteins S5 and S12.

Its function is as follows. One of the primary rRNA binding proteins, it binds directly to 16S rRNA central domain where it helps coordinate assembly of the platform of the 30S subunit. This Aeromonas salmonicida (strain A449) protein is Small ribosomal subunit protein uS8.